The sequence spans 348 residues: Mannonate dehydratase (348 aa).

The protein belongs to the mannonate dehydratase family. The cofactor is Fe(2+). Mn(2+) is required as a cofactor.

It catalyses the reaction D-mannonate = 2-dehydro-3-deoxy-D-gluconate + H2O. Its pathway is carbohydrate metabolism; pentose and glucuronate interconversion. Its function is as follows. Catalyzes the dehydration of D-mannonate. The sequence is that of Mannonate dehydratase from Staphylococcus haemolyticus (strain JCSC1435).